The sequence spans 426 residues: Ammonium transporter Rh type A (426 aa).

The Cytoplasmic segment spans residues methionine 1–lysine 4. The chain crosses the membrane as a helical span at residues phenylalanine 5–glutamine 25. Residues tyrosine 26 to proline 54 are Extracellular-facing. Asparagine 31 and asparagine 37 each carry an N-linked (GlcNAc...) asparagine glycan. Residues phenylalanine 55 to tryptophan 75 traverse the membrane as a helical segment. The Cytoplasmic segment spans residues lysine 76–glycine 78. The helical transmembrane segment at phenylalanine 79–isoleucine 99 threads the bilayer. Topologically, residues glutamine 100 to threonine 124 are extracellular. The next 2 helical transmembrane spans lie at valine 125–isoleucine 145 and methionine 146–tryptophan 166. Residues alanine 167–threonine 170 are Extracellular-facing. A helical membrane pass occupies residues glycine 171–leucine 191. The Cytoplasmic segment spans residues tyrosine 192–aspartate 210. A helical membrane pass occupies residues leucine 211–threonine 231. Topologically, residues alanine 232 to alanine 241 are extracellular. Residues isoleucine 242–leucine 262 traverse the membrane as a helical segment. The Cytoplasmic portion of the chain corresponds to leucine 263–asparagine 270. A helical membrane pass occupies residues methionine 271–cysteine 288. Residues alanine 289–glutamate 292 lie on the Extracellular side of the membrane. The chain crosses the membrane as a helical span at residues isoleucine 293–phenylalanine 313. Residues lysine 314–glycine 331 lie on the Cytoplasmic side of the membrane. Residues valine 332–alanine 352 form a helical membrane-spanning segment. The Extracellular portion of the chain corresponds to leucine 353–serine 371. Residues isoleucine 372–alanine 392 traverse the membrane as a helical segment. At glutamine 393–histidine 426 the chain is on the cytoplasmic side.

Belongs to the ammonium transporter (TC 2.A.49) family. Rh subfamily. In terms of assembly, homodimer. Heterotrimer; a RHCE monomer interacts with a RHAG homodimer. Component of the ankyrin-1 complex in the erythrocyte, composed of ANK1, RHCE, RHAG, SLC4A1, EPB42, GYPA, GYPB and AQP1. Interacts with GYPB (via the N-terminal); this interaction bridges the (RHAG)2(RHCE) heterotrimer with the SLC4A1 Band 3 I dimer complexed with GYPA. Glycosylated.

It is found in the membrane. The catalysed reaction is methylamine(out) = methylamine(in). It carries out the reaction NH4(+)(in) = NH4(+)(out). It catalyses the reaction CO2(out) = CO2(in). Functionally, component of the ankyrin-1 complex, a multiprotein complex involved in the stability and shape of the erythrocyte membrane. Heterotrimer with RHCE (RHAG)2(RHCE), that transports ammonium and its related derivative methylammonium, in both neutral and ionic forms, across the erythrocyte membrane. The transport of NH4(+) is electrogenic and masks the NH3 transport. Also, may act as a CO2 channel. Moreover in erythrocyte, regulates RHD membrane expression and is associated with rhesus blood group antigen expression. This is Ammonium transporter Rh type A from Bos taurus (Bovine).